We begin with the raw amino-acid sequence, 87 residues long: U3-theraphotoxin-Hhn1a 6 (87 aa).

The signal sequence occupies residues 1–24 (MVNMKASMFLTFAGLVLLFVVCYA). Positions 25–52 (SESEKKEFPKEMLSSIFAVDNDFKQEER) are excised as a propeptide. 3 disulfides stabilise this stretch: C54–C67, C61–C72, and C66–C79.

This sequence belongs to the neurotoxin 10 (Hwtx-1) family. 51 (Hntx-8) subfamily. Hntx-8 sub-subfamily. As to expression, expressed by the venom gland.

Its subcellular location is the secreted. Ion channel inhibitor. The sequence is that of U3-theraphotoxin-Hhn1a 6 from Cyriopagopus hainanus (Chinese bird spider).